The chain runs to 215 residues: Guanylate kinase (215 aa).

The region spanning G11–S189 is the Guanylate kinase-like domain. A18–S25 contributes to the ATP binding site.

The protein belongs to the guanylate kinase family.

The protein resides in the cytoplasm. The enzyme catalyses GMP + ATP = GDP + ADP. Essential for recycling GMP and indirectly, cGMP. The polypeptide is Guanylate kinase (Bordetella bronchiseptica (strain ATCC BAA-588 / NCTC 13252 / RB50) (Alcaligenes bronchisepticus)).